The following is a 414-amino-acid chain: FAD-dependent monooxygenase adaC (414 aa).

Residues Glu32, Ala43, Arg115, Asp325, and Gly338 each contribute to the FAD site.

It belongs to the paxM FAD-dependent monooxygenase family. It depends on FAD as a cofactor.

It carries out the reaction 3-(2,4-dioxopentyl)-3,6,8,9-tetrahydroxy-1-oxo-1,2,3,4-tetrahydroanthracene-2-carboxyl-[ACP] + NADPH + O2 + H(+) = 3-(2,4-dioxopentyl)-2,3,6,8,9-pentahydroxy-1-oxo-1,2,3,4-tetrahydroanthracene-2-carboxyl-[ACP] + NADP(+) + H2O. The protein operates within secondary metabolite biosynthesis. In terms of biological role, FAD-dependent monooxygenase; part of the gene cluster that mediates the biosynthesis of the linear tetracyclic TAN-1612 neuropeptide Y receptor antagonist. The decaketide backbone of TAN-1612 is synthesized by the non-reducing polyketide synthase adaA via condensation of one acetyl-CoA starter unit with 9 malonyl-CoA units. The FAD-dependent monooxygenase adaC then performs hydroxylation at C2 while the polaketide chain is still attached to the NRPKS adaA. The alpha-hydroxylation step at C2 appears to be crucial for the following C18-C1 Claisen cyclization and release of the C9-hydroxyl version of TAN-1612 from the NRPKS adaA, two steps performed by the lactamase-like protein adaB. Finally, the O-methyltransferase adaD performs the C9 O-methylation to complete the biosynthesis of TAN-1612. This chain is FAD-dependent monooxygenase adaC, found in Aspergillus niger.